Consider the following 607-residue polypeptide: Fatty acid amide hydrolase (607 aa).

Catalysis depends on charge relay system residues Lys-204 and Ser-280. Substrate is bound at residue 301 to 304 (GGGS). Residue Ser-304 is the Acyl-ester intermediate of the active site.

The protein belongs to the amidase family. In terms of assembly, forms homodimers.

Its subcellular location is the endoplasmic reticulum membrane. The protein resides in the cell membrane. It catalyses the reaction N-(9Z,12Z-octadecadienoyl)-ethanolamine + H2O = ethanolamine + (9Z,12Z)-octadecadienoate. Functionally, catalyzes the hydrolysis of bioactive endogenous fatty acid amides to their corresponding acids. The hydrolysis of endogenous amidated lipids terminates their participation as lipid mediators in various signaling systems. Converts a wide range of N-acylethanolamines (NAEs) to their corresponding free fatty acids and ethanolamine. The polypeptide is Fatty acid amide hydrolase (Medicago truncatula (Barrel medic)).